The primary structure comprises 100 residues: HssA/B-like protein 37 (100 aa).

Disordered regions lie at residues 1–29 and 67–100; these read MTLF…SGTS and RSRG…CCGI. A compositionally biased stretch (gly residues) spans 71–93; it reads SCGGNRGNGNGNGGMGGGNGSCC.

It belongs to the hssA/B family.

The chain is HssA/B-like protein 37 (hssl37) from Dictyostelium discoideum (Social amoeba).